The primary structure comprises 193 residues: MNFLAHLHLAHLAESSLSGNLLADFVRGNPEESFPPDVVAGIHMHRRIDVLTDNLPEVREAREWFRSETRRVAPITLDVMWDHFLSRHWSQLSPDFPLQEFVCYAREQVMTILPDSPPRFINLNNYLWSEQWLVRYRDMDFIQNVLNGMASRRPRLDALRDSWYDLDAHYDALETRFWQFYPRMMAQASHKAL.

Belongs to the AcpH family.

The enzyme catalyses holo-[ACP] + H2O = apo-[ACP] + (R)-4'-phosphopantetheine + H(+). Functionally, converts holo-ACP to apo-ACP by hydrolytic cleavage of the phosphopantetheine prosthetic group from ACP. The chain is Acyl carrier protein phosphodiesterase from Escherichia coli O139:H28 (strain E24377A / ETEC).